The sequence spans 100 residues: Large ribosomal subunit protein uL23 (100 aa).

This sequence belongs to the universal ribosomal protein uL23 family. Part of the 50S ribosomal subunit. Contacts protein L29, and trigger factor when it is bound to the ribosome.

In terms of biological role, one of the early assembly proteins it binds 23S rRNA. One of the proteins that surrounds the polypeptide exit tunnel on the outside of the ribosome. Forms the main docking site for trigger factor binding to the ribosome. The protein is Large ribosomal subunit protein uL23 of Prochlorococcus marinus (strain AS9601).